We begin with the raw amino-acid sequence, 141 residues long: Large ribosomal subunit protein uL11 (141 aa).

It belongs to the universal ribosomal protein uL11 family. Part of the ribosomal stalk of the 50S ribosomal subunit. Interacts with L10 and the large rRNA to form the base of the stalk. L10 forms an elongated spine to which L12 dimers bind in a sequential fashion forming a multimeric L10(L12)X complex. In terms of processing, one or more lysine residues are methylated.

Its function is as follows. Forms part of the ribosomal stalk which helps the ribosome interact with GTP-bound translation factors. This Streptococcus pneumoniae serotype 2 (strain D39 / NCTC 7466) protein is Large ribosomal subunit protein uL11.